The sequence spans 139 residues: MRVMGLDVGSKTVGVAISDPLGFTAQGVEIIKINEEAKEFGFDRLGELVKEYQVDKFVVGLPKNMNNTEGPRVEASKAYGDKIKEIFNLPVDYQDERLTTVQAERMLVEQADVSRGKRKKVIDKLAAQLILQNYLDRMF.

Belongs to the YqgF nuclease family.

The protein localises to the cytoplasm. Its function is as follows. Could be a nuclease involved in processing of the 5'-end of pre-16S rRNA. The chain is Putative pre-16S rRNA nuclease from Streptococcus thermophilus (strain CNRZ 1066).